The sequence spans 315 residues: Non-structural protein 2 (315 aa).

ATP-binding positions include S106 to R108, K187, and H220 to K222. An RNA-binding region spans residues L204–V240. Catalysis depends on H224, which acts as the For NTPase and RTPase activities. R226 lines the ATP pocket.

Belongs to the rotavirus NSP2 family. As to quaternary structure, homooctamer. Interacts with VP1; this interaction is weak. Interacts with NSP5; this interaction leads to up-regulation of NSP5 phosphorylation and formation of viral factories. Interacts with host DCP1A, DCP1B, DDX6, EDC4 and EIF2S1/eIF2-alpha; these interactions are probably part of the sequestration of some host SGs and PBs proteins in viral factories. It depends on Mg(2+) as a cofactor.

The protein resides in the host cytoplasm. In terms of biological role, participates in replication and packaging of the viral genome. Plays a crucial role, together with NSP5, in the formation of virus factories (viroplasms), which are large inclusions in the host cytoplasm where replication intermediates are assembled and viral RNA replication takes place. Displays ssRNA binding, NTPase, RNA triphosphatase (RTPase) and ATP-independent helix-unwinding activities. The unwinding activity may prepare and organize plus-strand RNAs for packaging and replication by removing interfering secondary structures. The RTPase activity plays a role in the removal of the gamma-phosphate from the rotavirus RNA minus strands of dsRNA genome segments. Participates in the selective exclusion of host proteins from stress granules (SG) and P bodies (PB). Also participates in the sequestration of these remodeled organelles in viral factories. This is Non-structural protein 2 from Aves (RV-A).